The following is a 186-amino-acid chain: uncharacterized protein (186 aa).

The segment at 156-186 is disordered; the sequence is DTKELERTTQPPEHQKHHQEPREKRGMNKRD. The segment covering 173 to 186 has biased composition (basic and acidic residues); it reads HQEPREKRGMNKRD.

This is an uncharacterized protein from Bacillus subtilis (strain 168).